Consider the following 279-residue polypeptide: Calcium-binding protein 4 (279 aa).

The segment covering 1-12 has biased composition (basic and acidic residues); that stretch reads MAEEQGRGRHGP. Positions 1–114 are disordered; sequence MAEEQGRGRH…PGPQHDAAQR (114 aa). Ser-42 bears the Phosphoserine mark. Residues 55-65 show a composition bias toward polar residues; sequence GPSSSGEQTPM. 4 consecutive EF-hand domains span residues 133–168, 187–204, 210–245, and 247–279; these read EELD…LGYM, GRVD…KLRE, LGLR…LLGE, and LVGP…LSRH. The Ca(2+) site is built by Asp-146, Asp-148, Asp-150, Tyr-152, and Asp-157. 10 residues coordinate Ca(2+): Asp-223, Asp-225, Asp-227, Arg-229, Glu-234, Asp-260, Asn-262, Asp-264, Thr-266, and Glu-271.

In terms of assembly, interacts with CACNA1F and CACNA1D (via IQ domain) in a calcium independent manner. Interacts (via N-terminus) with UNC119. Phosphorylated. Phosphorylation levels change with the light conditions and regulate the activity. As to expression, expressed in the retina.

The protein localises to the cytoplasm. The protein resides in the presynapse. Its function is as follows. May play a role in normal synaptic function, probably through regulation of Ca(2+) influx and neurotransmitter release in photoreceptor synaptic terminals and in auditory transmission. Modulator of CACNA1F, shifting the activation range to more hyperpolarized voltages. The chain is Calcium-binding protein 4 (CABP4) from Bos taurus (Bovine).